Consider the following 494-residue polypeptide: ATP synthase subunit beta, plastid (494 aa).

169 to 176 (GGAGVGKT) is an ATP binding site.

It belongs to the ATPase alpha/beta chains family. As to quaternary structure, F-type ATPases have 2 components, CF(1) - the catalytic core - and CF(0) - the membrane proton channel. CF(1) has five subunits: alpha(3), beta(3), gamma(1), delta(1), epsilon(1). CF(0) has four main subunits: a(1), b(1), b'(1) and c(9-12).

The protein resides in the plastid thylakoid membrane. It catalyses the reaction ATP + H2O + 4 H(+)(in) = ADP + phosphate + 5 H(+)(out). Its function is as follows. Produces ATP from ADP in the presence of a proton gradient across the membrane. The catalytic sites are hosted primarily by the beta subunits. This Cuscuta gronovii (Common dodder) protein is ATP synthase subunit beta, plastid (atpB).